The sequence spans 106 residues: Small ribosomal subunit protein uS10 (106 aa).

Belongs to the universal ribosomal protein uS10 family. Part of the 30S ribosomal subunit.

Its function is as follows. Involved in the binding of tRNA to the ribosomes. This Solibacter usitatus (strain Ellin6076) protein is Small ribosomal subunit protein uS10.